The primary structure comprises 343 residues: Methionine import ATP-binding protein MetN 1 (343 aa).

The region spanning 2 to 241 (IKLSNITKVF…PKTPLAQKFI (240 aa)) is the ABC transporter domain. 38–45 (GASGAGKS) lines the ATP pocket.

It belongs to the ABC transporter superfamily. Methionine importer (TC 3.A.1.24) family. The complex is composed of two ATP-binding proteins (MetN), two transmembrane proteins (MetI) and a solute-binding protein (MetQ).

The protein resides in the cell inner membrane. It catalyses the reaction L-methionine(out) + ATP + H2O = L-methionine(in) + ADP + phosphate + H(+). The enzyme catalyses D-methionine(out) + ATP + H2O = D-methionine(in) + ADP + phosphate + H(+). In terms of biological role, part of the ABC transporter complex MetNIQ involved in methionine import. Responsible for energy coupling to the transport system. In Salmonella paratyphi A (strain ATCC 9150 / SARB42), this protein is Methionine import ATP-binding protein MetN 1.